Here is a 159-residue protein sequence, read N- to C-terminus: Large ribosomal subunit protein uL10 (159 aa).

It belongs to the universal ribosomal protein uL10 family. As to quaternary structure, part of the ribosomal stalk of the 50S ribosomal subunit. The N-terminus interacts with L11 and the large rRNA to form the base of the stalk. The C-terminus forms an elongated spine to which L12 dimers bind in a sequential fashion forming a multimeric L10(L12)X complex.

Forms part of the ribosomal stalk, playing a central role in the interaction of the ribosome with GTP-bound translation factors. This chain is Large ribosomal subunit protein uL10, found in Campylobacter jejuni (strain RM1221).